We begin with the raw amino-acid sequence, 261 residues long: Indole-3-glycerol phosphate synthase (261 aa).

Belongs to the TrpC family.

The enzyme catalyses 1-(2-carboxyphenylamino)-1-deoxy-D-ribulose 5-phosphate + H(+) = (1S,2R)-1-C-(indol-3-yl)glycerol 3-phosphate + CO2 + H2O. It functions in the pathway amino-acid biosynthesis; L-tryptophan biosynthesis; L-tryptophan from chorismate: step 4/5. The chain is Indole-3-glycerol phosphate synthase from Oceanobacillus iheyensis (strain DSM 14371 / CIP 107618 / JCM 11309 / KCTC 3954 / HTE831).